The following is a 382-amino-acid chain: MAAGSVGVFATDEKIGSLLDQSITRHFLSTVTDQQGKICAEYVWIGGSMHDVRSKSRTLSTIPTKPEDLPHWNYDGSSTGQAPGHDSEVYLIPRSIFKDPFRGGDNILVMCDCYEPPKVNPDGTLAAPKPIPTNTRFACAEVMEKAKKEEPWFGIEQEYTLLNAITKWPLGWPKGGYPAPQGPYYCSAGAGVAIGRDVAEVHYRLCLAAGVNISGVNAEVLPSQWEYQVGPCEGITMGDHMWMSRYIMYRVCEMFNVEVSFDPKPIPGDWNGSGGHTNYSTKATRTAPDGWKVIQEHCAKLEARHAVHIAAYGEGNERRLTGKHETSSMSDFSWGVANRGCSIRVGRMVPVEKSGYYEDRRPASNLDAYVVTRLIVETTILL.

In terms of domain architecture, GS beta-grasp spans 36-118; sequence GKICAEYVWI…VMCDCYEPPK (83 aa). The 248-residue stretch at 135-382 folds into the GS catalytic domain; the sequence is TRFACAEVME…RLIVETTILL (248 aa).

The protein belongs to the glutamine synthetase family. Homooctamer.

It is found in the cytoplasm. It carries out the reaction L-glutamate + NH4(+) + ATP = L-glutamine + ADP + phosphate + H(+). This Chlamydomonas reinhardtii (Chlamydomonas smithii) protein is Glutamine synthetase cytosolic isozyme (GLN1).